The chain runs to 1755 residues: Transposon Ty1-LR3 Gag-Pol polyprotein (1755 aa).

Residues 1-16 (MESQQLSQHSHISHGS) are compositionally biased toward low complexity. 3 disordered regions span residues 1–93 (MESQ…MMTQ), 126–173 (PQSQ…RPPP), and 352–421 (GSRN…SKST). Composition is skewed to polar residues over residues 48–60 (TKAN…TPAS) and 127–152 (QSQF…GNTF). The segment covering 153–165 (TDSSSADSDMTST) has biased composition (low complexity). An RNA-binding region spans residues 299–401 (NNGIHINNKV…NSKSKTARAH (103 aa)). A compositionally biased stretch (low complexity) spans 402–418 (NVSTSNNSPSTDNDSIS). Serine 416 carries the phosphoserine modification. Residue aspartate 461 is the For protease activity; shared with dimeric partner of the active site. An integrase-type zinc finger-like region spans residues 583 to 640 (NVHTSESTRKYPYPFIHRMLAHANAQTIRYSLKNNTITYFNESDVDWSSAIDYQCPDC). The 170-residue stretch at 660–829 (NSYEPFQYLH…SQHAGLAGLD (170 aa)) folds into the Integrase catalytic domain. Mg(2+) is bound by residues aspartate 671 and aspartate 736. 3 disordered regions span residues 956–1087 (SKAV…ETEK), 1092–1111 (RSPS…NIVP), and 1129–1172 (ADLP…SNAY). Over residues 960–969 (SPTDSTPPST) the composition is skewed to low complexity. A compositionally biased stretch (polar residues) spans 1005–1015 (STPQISNIEST). A compositionally biased stretch (basic and acidic residues) spans 1038 to 1052 (ESSHASKSKDFRHSD). Polar residues-rich tracts occupy residues 1053–1082 (SYSN…QISD) and 1101–1111 (PENNSSHNIVP). The Bipartite nuclear localization signal motif lies at 1178–1212 (KKRSLEDNETEIKVSRDTWNTKNMRSLEPPRSKKR). One can recognise a Reverse transcriptase Ty1/copia-type domain in the interval 1338–1476 (NNYYITQLDI…DILGLEIKYQ (139 aa)). Positions 1346, 1427, 1428, 1610, 1652, and 1685 each coordinate Mg(2+). Positions 1610–1752 (DASYGNQPYY…IKTFKLLTNK (143 aa)) constitute an RNase H Ty1/copia-type domain.

As to quaternary structure, the capsid protein forms a homotrimer, from which the VLPs are assembled. The protease is a homodimer, whose active site consists of two apposed aspartic acid residues. Initially, virus-like particles (VLPs) are composed of the structural unprocessed proteins Gag and Gag-Pol, and also contain the host initiator methionine tRNA (tRNA(i)-Met) which serves as a primer for minus-strand DNA synthesis, and a dimer of genomic Ty RNA. Processing of the polyproteins occurs within the particle and proceeds by an ordered pathway, called maturation. First, the protease (PR) is released by autocatalytic cleavage of the Gag-Pol polyprotein yielding capsid protein p45 and a Pol-p154 precursor protein. This cleavage is a prerequisite for subsequent processing of Pol-p154 at the remaining sites to release the mature structural and catalytic proteins. Maturation takes place prior to the RT reaction and is required to produce transposition-competent VLPs.

It localises to the cytoplasm. Its subcellular location is the nucleus. It catalyses the reaction DNA(n) + a 2'-deoxyribonucleoside 5'-triphosphate = DNA(n+1) + diphosphate. The catalysed reaction is Endonucleolytic cleavage to 5'-phosphomonoester.. Functionally, capsid protein (CA) is the structural component of the virus-like particle (VLP), forming the shell that encapsulates the retrotransposons dimeric RNA genome. The particles are assembled from trimer-clustered units and there are holes in the capsid shells that allow for the diffusion of macromolecules. CA also has nucleocapsid-like chaperone activity, promoting primer tRNA(i)-Met annealing to the multipartite primer-binding site (PBS), dimerization of Ty1 RNA and initiation of reverse transcription. In terms of biological role, the aspartyl protease (PR) mediates the proteolytic cleavages of the Gag and Gag-Pol polyproteins after assembly of the VLP. Its function is as follows. Reverse transcriptase/ribonuclease H (RT) is a multifunctional enzyme that catalyzes the conversion of the retro-elements RNA genome into dsDNA within the VLP. The enzyme displays a DNA polymerase activity that can copy either DNA or RNA templates, and a ribonuclease H (RNase H) activity that cleaves the RNA strand of RNA-DNA heteroduplexes during plus-strand synthesis and hydrolyzes RNA primers. The conversion leads to a linear dsDNA copy of the retrotransposon that includes long terminal repeats (LTRs) at both ends. Integrase (IN) targets the VLP to the nucleus, where a subparticle preintegration complex (PIC) containing at least integrase and the newly synthesized dsDNA copy of the retrotransposon must transit the nuclear membrane. Once in the nucleus, integrase performs the integration of the dsDNA into the host genome. This is Transposon Ty1-LR3 Gag-Pol polyprotein (TY1B-LR3) from Saccharomyces cerevisiae (strain ATCC 204508 / S288c) (Baker's yeast).